The following is a 365-amino-acid chain: Chorismate synthase (365 aa).

Residues Arg48 and Arg54 each contribute to the NADP(+) site. FMN is bound by residues 125 to 127 (RSS), 238 to 239 (NA), Gly278, 293 to 297 (KPTSS), and Arg319.

This sequence belongs to the chorismate synthase family. In terms of assembly, homotetramer. FMNH2 serves as cofactor.

It carries out the reaction 5-O-(1-carboxyvinyl)-3-phosphoshikimate = chorismate + phosphate. Its pathway is metabolic intermediate biosynthesis; chorismate biosynthesis; chorismate from D-erythrose 4-phosphate and phosphoenolpyruvate: step 7/7. Catalyzes the anti-1,4-elimination of the C-3 phosphate and the C-6 proR hydrogen from 5-enolpyruvylshikimate-3-phosphate (EPSP) to yield chorismate, which is the branch point compound that serves as the starting substrate for the three terminal pathways of aromatic amino acid biosynthesis. This reaction introduces a second double bond into the aromatic ring system. This chain is Chorismate synthase, found in Janthinobacterium sp. (strain Marseille) (Minibacterium massiliensis).